The sequence spans 322 residues: Ribosomal RNA small subunit methyltransferase H (322 aa).

Residues 47-49 (GGH), aspartate 67, phenylalanine 93, aspartate 112, and glutamine 119 each bind S-adenosyl-L-methionine.

This sequence belongs to the methyltransferase superfamily. RsmH family.

It localises to the cytoplasm. The enzyme catalyses cytidine(1402) in 16S rRNA + S-adenosyl-L-methionine = N(4)-methylcytidine(1402) in 16S rRNA + S-adenosyl-L-homocysteine + H(+). Functionally, specifically methylates the N4 position of cytidine in position 1402 (C1402) of 16S rRNA. This chain is Ribosomal RNA small subunit methyltransferase H, found in Stenotrophomonas maltophilia (strain R551-3).